The primary structure comprises 211 residues: Small ribosomal subunit protein uS3 (211 aa).

One can recognise a KH type-2 domain in the interval 38–106 (LRKFIKKAFY…NIELNIIEVK (69 aa)).

This sequence belongs to the universal ribosomal protein uS3 family. As to quaternary structure, part of the 30S ribosomal subunit. Forms a tight complex with proteins S10 and S14.

Functionally, binds the lower part of the 30S subunit head. Binds mRNA in the 70S ribosome, positioning it for translation. The protein is Small ribosomal subunit protein uS3 of Ehrlichia ruminantium (strain Welgevonden).